The chain runs to 339 residues: Dihydroorotate dehydrogenase (quinone) (339 aa).

Residues 62-66 (AGMDK) and T86 each bind FMN. Substrate is bound at residue K66. Residue 111–115 (NRMGF) participates in substrate binding. FMN is bound by residues N139 and N172. Residue N172 participates in substrate binding. The Nucleophile role is filled by S175. N177 contacts substrate. FMN contacts are provided by K217 and T245. 246-247 (NT) contributes to the substrate binding site. FMN contacts are provided by residues G268, G297, and 318 to 319 (YS).

Belongs to the dihydroorotate dehydrogenase family. Type 2 subfamily. In terms of assembly, monomer. It depends on FMN as a cofactor.

It localises to the cell membrane. It catalyses the reaction (S)-dihydroorotate + a quinone = orotate + a quinol. Its pathway is pyrimidine metabolism; UMP biosynthesis via de novo pathway; orotate from (S)-dihydroorotate (quinone route): step 1/1. In terms of biological role, catalyzes the conversion of dihydroorotate to orotate with quinone as electron acceptor. This is Dihydroorotate dehydrogenase (quinone) from Shewanella sediminis (strain HAW-EB3).